Reading from the N-terminus, the 545-residue chain is CTP synthase (545 aa).

Positions 1-266 (MITNYIFVTG…DQYICDKFNL (266 aa)) are amidoligase domain. Residue serine 14 coordinates CTP. Serine 14 serves as a coordination point for UTP. ATP contacts are provided by residues 15-20 (SLGKGI) and aspartate 72. 2 residues coordinate Mg(2+): aspartate 72 and glutamate 140. CTP contacts are provided by residues 147 to 149 (DIE), 187 to 192 (KTKPTQ), and lysine 223. UTP is bound by residues 187–192 (KTKPTQ) and lysine 223. 239-241 (KDV) lines the ATP pocket. Residues 291–542 (SIGMVGKYIE…VKSALAHHQD (252 aa)) enclose the Glutamine amidotransferase type-1 domain. Glycine 352 provides a ligand contact to L-glutamine. Cysteine 379 acts as the Nucleophile; for glutamine hydrolysis in catalysis. Residues 380 to 383 (LGMQ), glutamate 403, and arginine 470 contribute to the L-glutamine site. Residues histidine 515 and glutamate 517 contribute to the active site.

Belongs to the CTP synthase family. As to quaternary structure, homotetramer.

It catalyses the reaction UTP + L-glutamine + ATP + H2O = CTP + L-glutamate + ADP + phosphate + 2 H(+). The catalysed reaction is L-glutamine + H2O = L-glutamate + NH4(+). The enzyme catalyses UTP + NH4(+) + ATP = CTP + ADP + phosphate + 2 H(+). The protein operates within pyrimidine metabolism; CTP biosynthesis via de novo pathway; CTP from UDP: step 2/2. With respect to regulation, allosterically activated by GTP, when glutamine is the substrate; GTP has no effect on the reaction when ammonia is the substrate. The allosteric effector GTP functions by stabilizing the protein conformation that binds the tetrahedral intermediate(s) formed during glutamine hydrolysis. Inhibited by the product CTP, via allosteric rather than competitive inhibition. Its function is as follows. Catalyzes the ATP-dependent amination of UTP to CTP with either L-glutamine or ammonia as the source of nitrogen. Regulates intracellular CTP levels through interactions with the four ribonucleotide triphosphates. The sequence is that of CTP synthase from Hamiltonella defensa subsp. Acyrthosiphon pisum (strain 5AT).